Here is a 213-residue protein sequence, read N- to C-terminus: Outer-membrane lipoprotein carrier protein (213 aa).

An N-terminal signal peptide occupies residues 1–23; sequence MKKLLKQSLLGFALVSMTGAAFA.

Belongs to the LolA family. Monomer.

Its subcellular location is the periplasm. Participates in the translocation of lipoproteins from the inner membrane to the outer membrane. Only forms a complex with a lipoprotein if the residue after the N-terminal Cys is not an aspartate (The Asp acts as a targeting signal to indicate that the lipoprotein should stay in the inner membrane). The protein is Outer-membrane lipoprotein carrier protein of Actinobacillus pleuropneumoniae serotype 7 (strain AP76).